A 70-amino-acid chain; its full sequence is Conotoxin TsMLKM-011 (70 aa).

A signal peptide spans 1–24; it reads MLKMGVVLFVFLVLFPLATLQLDA. Positions 25–54 are excised as a propeptide; that stretch reads DQPVERYAENKQLVSPYERRQIILHALGQR. Cystine bridges form between cysteine 56–cysteine 66, cysteine 57–cysteine 68, and cysteine 62–cysteine 69.

It belongs to the conotoxin M superfamily. Expressed by the venom duct.

It localises to the secreted. In Conus tessulatus (Tessellate cone), this protein is Conotoxin TsMLKM-011.